The chain runs to 1008 residues: Probable beta-galactosidase B (1008 aa).

An N-terminal signal peptide occupies residues 1–18 (MLLQSLFAWALAIGPCIA). N-linked (GlcNAc...) asparagine glycans are attached at residues asparagine 20 and asparagine 23. Substrate is bound at residue tyrosine 87. The N-linked (GlcNAc...) asparagine glycan is linked to asparagine 108. Positions 132, 133, 134, and 192 each coordinate substrate. Glutamate 193 acts as the Proton donor in catalysis. An N-linked (GlcNAc...) asparagine glycan is attached at asparagine 208. Tyrosine 262 lines the substrate pocket. Residues cysteine 268 and cysteine 321 are joined by a disulfide bond. Asparagine 269 carries N-linked (GlcNAc...) asparagine glycosylation. Catalysis depends on glutamate 305, which acts as the Nucleophile. Tyrosine 370 contributes to the substrate binding site. Residues asparagine 453, asparagine 594, asparagine 624, asparagine 681, asparagine 703, asparagine 782, asparagine 788, asparagine 816, asparagine 826, and asparagine 879 are each glycosylated (N-linked (GlcNAc...) asparagine).

It belongs to the glycosyl hydrolase 35 family.

The protein localises to the secreted. It catalyses the reaction Hydrolysis of terminal non-reducing beta-D-galactose residues in beta-D-galactosides.. Cleaves beta-linked terminal galactosyl residues from gangliosides, glycoproteins, and glycosaminoglycans. The protein is Probable beta-galactosidase B (lacB) of Sclerotinia sclerotiorum (strain ATCC 18683 / 1980 / Ss-1) (White mold).